Reading from the N-terminus, the 190-residue chain is MKLLLLCLGLILVHAHEEENDVVKGNFDISKISGDWYSILLASDIKEKIEENGSMRVFVKDIEVLSNSSLIFTMHTKVNGKCTKISLICNKTEKDGEYDVVHDGYNLFRIIETAYEDYIIFHLNNVNQEQEFQLMELYGRKPDVSPKVKEKFVRYCQGMEIPKENILDLTQVDRCLQARQSEAAQVSSAE.

A signal peptide spans 1-15; it reads MKLLLLCLGLILVHA. Positions 43–54 are igE-binding; the sequence is SDIKEKIEENGS. N-linked (GlcNAc...) asparagine glycosylation is found at asparagine 52 and asparagine 67. Residues 76-83 form an igE-binding region; it reads TKVNGKCT. A disulfide bridge links cysteine 82 with cysteine 175. The N-linked (GlcNAc...) asparagine glycan is linked to asparagine 90. Residues 91–97 form an igE-binding region; that stretch reads KTEKDGE. The segment at 100–109 is no IgE-binding; the sequence is VVHDGYNLFR. IgE-binding regions lie at residues 125 to 132 and 139 to 152; these read NVNQEQEF and GRKP…KEKF.

This sequence belongs to the calycin superfamily. Lipocalin family. Monomer. As to expression, expressed in saliva (at protein level). Expressed in dander (at protein level). According to PubMed:22104604, expressed in submaxillary gland. In contrast, according to PubMed:22515174, not expressed in submaxillary gland. Expressed in bladder and skin, but not in tongue.

The protein localises to the secreted. The protein is Lipocalin Can f 6.0101 of Canis lupus familiaris (Dog).